The primary structure comprises 79 residues: Small ribosomal subunit protein uS17 (79 aa).

The protein belongs to the universal ribosomal protein uS17 family. In terms of assembly, part of the 30S ribosomal subunit.

In terms of biological role, one of the primary rRNA binding proteins, it binds specifically to the 5'-end of 16S ribosomal RNA. The sequence is that of Small ribosomal subunit protein uS17 from Rhizobium etli (strain CIAT 652).